The following is a 382-amino-acid chain: Galactokinase (382 aa).

Position 34–37 (34–37 (EHTD)) interacts with substrate. ATP is bound at residue 124–130 (GAGLSSS). Residues serine 130 and glutamate 162 each coordinate Mg(2+). Aspartate 174 acts as the Proton acceptor in catalysis. Position 223 (tyrosine 223) interacts with substrate.

Belongs to the GHMP kinase family. GalK subfamily.

The protein resides in the cytoplasm. The enzyme catalyses alpha-D-galactose + ATP = alpha-D-galactose 1-phosphate + ADP + H(+). It participates in carbohydrate metabolism; galactose metabolism. Functionally, catalyzes the transfer of the gamma-phosphate of ATP to D-galactose to form alpha-D-galactose-1-phosphate (Gal-1-P). This Erwinia tasmaniensis (strain DSM 17950 / CFBP 7177 / CIP 109463 / NCPPB 4357 / Et1/99) protein is Galactokinase.